The chain runs to 381 residues: L-lactate dehydrogenase (381 aa).

Positions 1-380 (MIISASTDYR…TRDSLVRELG (380 aa)) constitute an FMN hydroxy acid dehydrogenase domain. A substrate-binding site is contributed by tyrosine 24. The FMN site is built by serine 106 and glutamine 127. Residue tyrosine 129 participates in substrate binding. Threonine 155 is a binding site for FMN. Substrate is bound at residue arginine 164. Lysine 251 lines the FMN pocket. Histidine 275 functions as the Proton acceptor in the catalytic mechanism. Arginine 278 is a substrate binding site. 306-330 (DSGIRSGLDVVRMIALGADTVLIGR) is a binding site for FMN.

This sequence belongs to the FMN-dependent alpha-hydroxy acid dehydrogenase family. Homotetramer. Requires FMN as cofactor.

It localises to the cell inner membrane. It carries out the reaction (S)-lactate + A = pyruvate + AH2. Catalyzes the conversion of L-lactate to pyruvate. Is coupled to the respiratory chain. This Pseudomonas entomophila (strain L48) protein is L-lactate dehydrogenase.